The sequence spans 460 residues: Protein king tubby (460 aa).

Disordered stretches follow at residues 75-97 (NGSP…NNMR) and 115-208 (HELE…EGDV). Over residues 85–97 (AMNTSRNHSNNMR) the composition is skewed to polar residues. Over residues 130–145 (QHQQSASHSANSTQSQ) the composition is skewed to low complexity. The residue at position 153 (S153) is a Phosphoserine. The span at 194 to 203 (NGTGNGTGGE) shows a compositional bias: gly residues.

It belongs to the TUB family. In terms of tissue distribution, detected in sensory neurons which have a ciliary structure such as the chordotonal neurons, Orco-expressing olfactory receptor neurons, labellar gustatory receptor neurons and in the femoral chordotonal organ (at protein level). In the chordotonal neurons of the Johnston's organ expressed in the proximal to distal cilia, with lower levels of expression in the distal portion (at protein level). Also detected in the salivary glands and antenna (at protein level). Expressed in photoreceptor cells (at protein level). At stage 9 expression is detected in a subset of neuroblasts. By stage 12 expression is found in both the CNS and PNS. In late-stage embryos, expression persists in the CNS and PNS with more abundant expression in the antennal-maxillary sensory neurons and in bilateral groups of cells in the brain.

The protein resides in the cytoplasm. Its subcellular location is the nucleus. It localises to the cell projection. It is found in the cilium membrane. The protein localises to the rhabdomere. Functions in regulating protein trafficking, retinal maintenance and lipid storage. Protects photoreceptor cells R1 to R6 against light-induced retinal degeneration by stimulating norpA-mediated endocytosis of the rhodopsin ninaE (Rh1). In the auditory receptor neurons, functions as a cilia trafficking regulator of various transient receptor potential (TRP) channel components including iav and nompC. Likely to deliver pre-ciliary vesicles containing membrane proteins such as iav and nompC to the intraflagellar transport complex (IFT) at the cilia base. Plays a role in the inhibition of fat storage. This is Protein king tubby (ktub) from Drosophila melanogaster (Fruit fly).